The following is a 1197-amino-acid chain: Pleckstrin homology domain-containing family A member 7 (1197 aa).

WW domains lie at 8 to 41 (DTLP…HPRT) and 53 to 86 (SDLP…HPVT). Positions 98–148 (LQDQPGGRMLKQPSSTISEASTTVTTSTVDSTSGSKGSRSSGRVHSFGKRD) are disordered. A compositionally biased stretch (low complexity) spans 111–140 (SSTISEASTTVTTSTVDSTSGSKGSRSSGR). One can recognise a PH domain in the interval 158 to 257 (PVVVRGWLYK…WVRAMNQAAL (100 aa)). Disordered stretches follow at residues 348-384 (PGST…NGMP), 423-467 (LVST…QLPS), and 508-577 (FRHG…TVRP). Residues 528 to 546 (VSSTRNNSDVSRSVSVPPT) are compositionally biased toward low complexity. Basic and acidic residues predominate over residues 568 to 577 (TPAERVTVRP). Residues 678-799 (DKILQELEFR…RIEDVMTGLS (122 aa)) adopt a coiled-coil conformation. Disordered stretches follow at residues 830–928 (SRCM…SYSN) and 1032–1064 (HQRA…SDPG). Basic and acidic residues predominate over residues 913–924 (RQSDERKRDRES). A coiled-coil region spans residues 1016-1044 (QRVRMSVEEQLERMKRHQRALVRERKRNL). Positions 1032-1043 (HQRALVRERKRN) are enriched in basic residues.

The protein resides in the cell junction. Its subcellular location is the adherens junction. The protein localises to the cytoplasm. It is found in the cytoskeleton. It localises to the microtubule organizing center. The protein resides in the centrosome. In terms of biological role, required for zonula adherens biogenesis and maintenance. The chain is Pleckstrin homology domain-containing family A member 7 (plekha7) from Danio rerio (Zebrafish).